The chain runs to 1116 residues: Protein translocase subunit SecA (1116 aa).

ATP is bound by residues Q177, 195–199 (GEGKT), and D692.

Belongs to the SecA family. Monomer and homodimer. Part of the essential Sec protein translocation apparatus which comprises SecA, SecYEG and auxiliary proteins SecDF. Other proteins may also be involved.

It localises to the cell inner membrane. The protein localises to the cytoplasm. The enzyme catalyses ATP + H2O + cellular proteinSide 1 = ADP + phosphate + cellular proteinSide 2.. Its function is as follows. Part of the Sec protein translocase complex. Interacts with the SecYEG preprotein conducting channel. Has a central role in coupling the hydrolysis of ATP to the transfer of proteins into and across the cell membrane, serving as an ATP-driven molecular motor driving the stepwise translocation of polypeptide chains across the membrane. The protein is Protein translocase subunit SecA of Flavobacterium psychrophilum (strain ATCC 49511 / DSM 21280 / CIP 103535 / JIP02/86).